Here is a 153-residue protein sequence, read N- to C-terminus: AGAAEDLSKEQVQMLRKAFDMFDRDKKGVIHTNMVSTILRTLGQTFEEKDLKDLIAEIDQDGSGELEFEEFMALAARFLVEEDAEAMQEELREAFRLYDKQGQGFINVSDLRDILRALDDKLTEDELDEMIAEIDTDGSGTVDFDEFMEMMTG.

At A1 the chain carries Blocked amino end (Ala). EF-hand domains follow at residues 10–45 (EQVQMLRKAFDMFDRDKKGVIHTNMVSTILRTLGQT), 46–81 (FEEKDLKDLIAEIDQDGSGELEFEEFMALAARFLVE), 86–121 (AMQEELREAFRLYDKQGQGFINVSDLRDILRALDDK), and 122–153 (LTEDELDEMIAEIDTDGSGTVDFDEFMEMMTG). The Ca(2+) site is built by D59, D61, S63, E65, E70, D99, D110, D135, D137, S139, T141, and E146.

This sequence belongs to the troponin C family.

Its function is as follows. Troponin is the central regulatory protein of striated muscle contraction. Tn consists of three components: Tn-I which is the inhibitor of actomyosin ATPase, Tn-T which contains the binding site for tropomyosin and Tn-C. The binding of calcium to Tn-C abolishes the inhibitory action of Tn on actin filaments. The sequence is that of Troponin C from Tachypleus tridentatus (Japanese horseshoe crab).